We begin with the raw amino-acid sequence, 657 residues long: Glycogen debranching enzyme (657 aa).

Aspartate 336 (nucleophile) is an active-site residue. Glutamate 371 functions as the Proton donor in the catalytic mechanism. A disordered region spans residues 460–479 (ANGEENRDGTNNNYSNNHGK).

Belongs to the glycosyl hydrolase 13 family.

It carries out the reaction Hydrolysis of (1-&gt;6)-alpha-D-glucosidic linkages to branches with degrees of polymerization of three or four glucose residues in limit dextrin.. It functions in the pathway glycan degradation; glycogen degradation. Removes maltotriose and maltotetraose chains that are attached by 1,6-alpha-linkage to the limit dextrin main chain, generating a debranched limit dextrin. The sequence is that of Glycogen debranching enzyme from Escherichia coli O17:K52:H18 (strain UMN026 / ExPEC).